The chain runs to 91 residues: Cell division topological specificity factor (91 aa).

Belongs to the MinE family.

Its function is as follows. Prevents the cell division inhibition by proteins MinC and MinD at internal division sites while permitting inhibition at polar sites. This ensures cell division at the proper site by restricting the formation of a division septum at the midpoint of the long axis of the cell. The sequence is that of Cell division topological specificity factor from Desulfitobacterium hafniense (strain DSM 10664 / DCB-2).